The following is a 151-amino-acid chain: Transcriptional regulator MraZ (151 aa).

2 SpoVT-AbrB domains span residues 5 to 52 and 81 to 124; these read ANAI…PLSE and AVDL…DEDA.

It belongs to the MraZ family. As to quaternary structure, forms oligomers.

The protein resides in the cytoplasm. It is found in the nucleoid. The protein is Transcriptional regulator MraZ of Pseudomonas savastanoi pv. phaseolicola (strain 1448A / Race 6) (Pseudomonas syringae pv. phaseolicola (strain 1448A / Race 6)).